Here is a 127-residue protein sequence, read N- to C-terminus: UPF0102 protein Gura_3756 (127 aa).

It belongs to the UPF0102 family.

This Geotalea uraniireducens (strain Rf4) (Geobacter uraniireducens) protein is UPF0102 protein Gura_3756.